The following is a 1179-amino-acid chain: Integrin alpha-1 (1179 aa).

An N-terminal signal peptide occupies residues 1–28 (MVPRRPASLEVTVACIWLLTVILGVCIS). Topologically, residues 29–1141 (FNVDVKNSMS…SKDGLPGRVP (1113 aa)) are extracellular. The stretch at 30 to 91 (NVDVKNSMSF…CPVGRERSMP (62 aa)) is one FG-GAP 1 repeat. An intrachain disulfide couples C82 to C92. N100, N105, N112, N217, N317, N341, N402, N418, and N459 each carry an N-linked (GlcNAc...) asparagine glycan. One copy of the FG-GAP 2 repeat lies at 101–160 (TSIPNVTEIKENMTFGSTLVTNPKGGFLACGPLYAYRCGHLHYTTGICSDVSPTFQVVNS). The VWFA domain occupies 175 to 364 (IVLDGSNSIY…LGERIFALEA (190 aa)). The stretch at 365-417 (TADQSAASFEMEMSQTGFSAHYSQDWVMLGAVGAYDWNGTVVMQKANQIVIPH) is one FG-GAP 3 repeat. FG-GAP repeat units lie at residues 422 to 474 (QTEP…DGDV), 475 to 537 (NILQ…RFEY), 556 to 614 (SCTK…TIRK), and 618 to 678 (QRIP…FEPN). 4 residues coordinate Ca(2+): D497, D499, D501, and D505. Residue N531 is glycosylated (N-linked (GlcNAc...) asparagine). Ca(2+)-binding residues include D579, N581, D583, D587, D641, N643, D645, and D649. C687 and C696 are oxidised to a cystine. N-linked (GlcNAc...) asparagine glycosylation is found at N698, N747, and N779. A disulfide bridge connects residues C702 and C755. C807 and C813 form a disulfide bridge. N839, N882, N907, N938, N965, N973, and N1007 each carry an N-linked (GlcNAc...) asparagine glycan. C877 and C885 form a disulfide bridge. Cystine bridges form between C1029–C1062 and C1065–C1072. N-linked (GlcNAc...) asparagine glycans are attached at residues N1083, N1102, and N1113. A helical transmembrane segment spans residues 1142–1164 (LWVILLSAFAGLLLLMLLILALW). Over 1165–1179 (KIGFFKRPLKKKMEK) the chain is Cytoplasmic. The short motif at 1167 to 1171 (GFFKR) is the GFFKR motif element.

This sequence belongs to the integrin alpha chain family. In terms of assembly, heterodimer of an alpha and a beta subunit. Alpha-1 associates with beta-1. Interacts with RAB21. Interacts (via cytoplasmic domain) with PTPN2; activates PTPN2 phosphatase activity towards EGFR and negatively regulates EGF signaling.

The protein localises to the membrane. Functionally, integrin alpha-1/beta-1 is a receptor for laminin and collagen. It recognizes the proline-hydroxylated sequence G-F-P-G-E-R in collagen. Involved in anchorage-dependent, negative regulation of EGF-stimulated cell growth. This is Integrin alpha-1 (Itga1) from Mus musculus (Mouse).